Consider the following 646-residue polypeptide: uncharacterized protein (646 aa).

The next 8 helical transmembrane spans lie at 20–42, 55–77, 97–115, 127–149, 159–181, 188–206, 216–238, and 251–273; these read ILSR…LYLL, FLAG…IHQV, LLHF…HYML, YTFD…FSYW, IAFV…FFKL, ILLG…LLLA, YGAV…YHLF, and WVTM…IGTA.

Its subcellular location is the cell membrane. This is an uncharacterized protein from Bacillus subtilis (strain 168).